Consider the following 152-residue polypeptide: Large ribosomal subunit protein uL30 (152 aa).

This sequence belongs to the universal ribosomal protein uL30 family. Part of the 50S ribosomal subunit.

In Methanosphaera stadtmanae (strain ATCC 43021 / DSM 3091 / JCM 11832 / MCB-3), this protein is Large ribosomal subunit protein uL30.